A 420-amino-acid polypeptide reads, in one-letter code: UDP-N-acetylglucosamine 1-carboxyvinyltransferase (420 aa).

Residue Lys-22–Asn-23 participates in phosphoenolpyruvate binding. A UDP-N-acetyl-alpha-D-glucosamine-binding site is contributed by Arg-92. The Proton donor role is filled by Cys-116. At Cys-116 the chain carries 2-(S-cysteinyl)pyruvic acid O-phosphothioketal. Residues Asp-306 and Ile-328 each contribute to the UDP-N-acetyl-alpha-D-glucosamine site.

This sequence belongs to the EPSP synthase family. MurA subfamily.

The protein resides in the cytoplasm. The enzyme catalyses phosphoenolpyruvate + UDP-N-acetyl-alpha-D-glucosamine = UDP-N-acetyl-3-O-(1-carboxyvinyl)-alpha-D-glucosamine + phosphate. It participates in cell wall biogenesis; peptidoglycan biosynthesis. Cell wall formation. Adds enolpyruvyl to UDP-N-acetylglucosamine. The chain is UDP-N-acetylglucosamine 1-carboxyvinyltransferase from Blochmanniella floridana.